The chain runs to 64 residues: DNA gyrase inhibitor YacG (64 aa).

Cys-9, Cys-12, Cys-28, and Cys-32 together coordinate Zn(2+).

The protein belongs to the DNA gyrase inhibitor YacG family. Interacts with GyrB. It depends on Zn(2+) as a cofactor.

Its function is as follows. Inhibits all the catalytic activities of DNA gyrase by preventing its interaction with DNA. Acts by binding directly to the C-terminal domain of GyrB, which probably disrupts DNA binding by the gyrase. In Enterobacter sp. (strain 638), this protein is DNA gyrase inhibitor YacG.